Here is a 267-residue protein sequence, read N- to C-terminus: Thiamine pyrophosphokinase 1 (267 aa).

Belongs to the thiamine pyrophosphokinase family. As to expression, expressed in roots, leaves and flowers.

Its subcellular location is the cytoplasm. It localises to the cytosol. It carries out the reaction thiamine + ATP = thiamine diphosphate + AMP + H(+). It functions in the pathway cofactor biosynthesis; thiamine diphosphate biosynthesis; thiamine diphosphate from thiamine: step 1/1. Catalyzes the phosphorylation of thiamine to thiamine pyrophosphate (TPP). TPP is an active cofactor for enzymes involved in glycolysis and energy production. Plant leaves require high levels of TPP for photosynthesis and carbohydrate metabolism. This chain is Thiamine pyrophosphokinase 1, found in Arabidopsis thaliana (Mouse-ear cress).